We begin with the raw amino-acid sequence, 440 residues long: Thymidine phosphorylase (440 aa).

This sequence belongs to the thymidine/pyrimidine-nucleoside phosphorylase family. In terms of assembly, homodimer.

The catalysed reaction is thymidine + phosphate = 2-deoxy-alpha-D-ribose 1-phosphate + thymine. Its pathway is pyrimidine metabolism; dTMP biosynthesis via salvage pathway; dTMP from thymine: step 1/2. Its function is as follows. The enzymes which catalyze the reversible phosphorolysis of pyrimidine nucleosides are involved in the degradation of these compounds and in their utilization as carbon and energy sources, or in the rescue of pyrimidine bases for nucleotide synthesis. The polypeptide is Thymidine phosphorylase (Salmonella arizonae (strain ATCC BAA-731 / CDC346-86 / RSK2980)).